Here is a 118-residue protein sequence, read N- to C-terminus: Protein TusC (118 aa).

The protein belongs to the DsrF/TusC family. As to quaternary structure, heterohexamer, formed by a dimer of trimers. The hexameric TusBCD complex contains 2 copies each of TusB, TusC and TusD. The TusBCD complex interacts with TusE.

It is found in the cytoplasm. Its function is as follows. Part of a sulfur-relay system required for 2-thiolation of 5-methylaminomethyl-2-thiouridine (mnm(5)s(2)U) at tRNA wobble positions. This is Protein TusC from Salmonella paratyphi C (strain RKS4594).